Reading from the N-terminus, the 346-residue chain is Eukaryotic translation initiation factor 3 subunit I (346 aa).

WD repeat units follow at residues 8–47 (GHERSLTQVKYNREGDLIFTSGKDNVASVWYAMNGERLGT), 50–89 (GHNGSIWSIDVDQHTEYAVTGSADFSVKVWRVRDGSIAHS), 150–189 (EGCAPVLVASWSYDGKYIVAGHQDGKISKYNGVTGECLEI), 192–233 (LHKQ…KTYE), and 289–328 (DHFGPVNYIAVSPQGTSYASGGEDGFVRLHHFDKSYFDFK).

This sequence belongs to the eIF-3 subunit I family. As to quaternary structure, component of the eukaryotic translation initiation factor 3 (eIF-3) complex.

The protein localises to the cytoplasm. Functionally, component of the eukaryotic translation initiation factor 3 (eIF-3) complex, which is involved in protein synthesis of a specialized repertoire of mRNAs and, together with other initiation factors, stimulates binding of mRNA and methionyl-tRNAi to the 40S ribosome. The eIF-3 complex specifically targets and initiates translation of a subset of mRNAs involved in cell proliferation. This is Eukaryotic translation initiation factor 3 subunit I from Eremothecium gossypii (strain ATCC 10895 / CBS 109.51 / FGSC 9923 / NRRL Y-1056) (Yeast).